A 205-amino-acid polypeptide reads, in one-letter code: Small ribosomal subunit protein uS4 (205 aa).

The segment at 20–47 (WGRSKSPLNRGKENPPGQHGQRRKKPSD) is disordered. Residues 94-154 (CRLDAVVYRL…TKSKDMALIL (61 aa)) enclose the S4 RNA-binding domain.

Belongs to the universal ribosomal protein uS4 family. As to quaternary structure, part of the 30S ribosomal subunit. Contacts protein S5. The interaction surface between S4 and S5 is involved in control of translational fidelity.

Its function is as follows. One of the primary rRNA binding proteins, it binds directly to 16S rRNA where it nucleates assembly of the body of the 30S subunit. With S5 and S12 plays an important role in translational accuracy. The protein is Small ribosomal subunit protein uS4 of Paramagnetospirillum magneticum (strain ATCC 700264 / AMB-1) (Magnetospirillum magneticum).